Reading from the N-terminus, the 316-residue chain is Ornithine carbamoyltransferase (316 aa).

Carbamoyl phosphate contacts are provided by residues 57-60, Gln84, Arg108, and 135-138; these read STRT and HPCQ. Residues Asn166, Asp230, and 234 to 235 contribute to the L-ornithine site; that span reads SM. Carbamoyl phosphate contacts are provided by residues 269–270 and Arg297; that span reads CL.

The protein belongs to the aspartate/ornithine carbamoyltransferase superfamily. OTCase family.

The protein resides in the cytoplasm. The enzyme catalyses carbamoyl phosphate + L-ornithine = L-citrulline + phosphate + H(+). It functions in the pathway amino-acid degradation; L-arginine degradation via ADI pathway; carbamoyl phosphate from L-arginine: step 2/2. In terms of biological role, reversibly catalyzes the transfer of the carbamoyl group from carbamoyl phosphate (CP) to the N(epsilon) atom of ornithine (ORN) to produce L-citrulline. In Bacillus cereus (strain 03BB102), this protein is Ornithine carbamoyltransferase.